The primary structure comprises 155 residues: Putative ATP synthase protein YMF19-like protein (155 aa).

3 consecutive transmembrane segments (helical) span residues 23–43 (FLWL…VLVF), 89–109 (WRAL…LGSF), and 117–137 (VDFG…LFFF).

The protein belongs to the ATPase protein YMF19 family.

The protein resides in the mitochondrion membrane. The protein is Putative ATP synthase protein YMF19-like protein (YMF18) of Marchantia polymorpha (Common liverwort).